The following is a 219-amino-acid chain: Protein DMP5 (219 aa).

The disordered stretch occupies residues 1–24; sequence MSALRLRNANTPAPELDELSDQTP. Transmembrane regions (helical) follow at residues 51–71, 82–102, 142–162, and 182–202; these read LSNL…PVFT, FLTA…SFTD, MRFV…AVAL, and VLDI…MVFP.

This sequence belongs to the plant DMP1 protein family.

The protein resides in the endoplasmic reticulum membrane. Functionally, involved in membrane remodeling. The polypeptide is Protein DMP5 (Arabidopsis thaliana (Mouse-ear cress)).